We begin with the raw amino-acid sequence, 423 residues long: Methanol:N,N-dimethyl-4-nitrosoaniline oxidoreductase (423 aa).

It belongs to the iron-containing alcohol dehydrogenase family. Homodecamer. The cofactor is Mg(2+). Zn(2+) is required as a cofactor. Requires NADPH as cofactor.

It carries out the reaction methanol + A = formaldehyde + AH2. Its function is as follows. Catalyzes the oxidation of methanol to yield formaldehyde. While the in vivo electron acceptor is not known, N,N-dimethyl-4-nitrosoaniline (NDMA) can serve this function in vitro and is reduced to 4-(hydroxylamino)-N,N-dimethylaniline. It is also able to use ethanol and formaldehyde with an activity comparable to methanol, and has a weak activity with methylamine as substrate. This Mycobacterium sp. (strain DSM 3803 / JC1) protein is Methanol:N,N-dimethyl-4-nitrosoaniline oxidoreductase.